The sequence spans 294 residues: Kynurenine formamidase (294 aa).

Over residues 1–14 the composition is skewed to basic and acidic residues; that stretch reads MSRWKDMNKDELER. Residues 1–20 form a disordered region; the sequence is MSRWKDMNKDELERQFSPSQ. Positions 84–88 match the HGGXW motif; sequence HGGYW. Catalysis depends on Ser-153, which acts as the Nucleophile. Catalysis depends on residues Asp-236 and His-269.

Belongs to the kynurenine formamidase family. Homodimer.

The protein localises to the cytoplasm. Its subcellular location is the cytosol. It is found in the nucleus. It catalyses the reaction N-formyl-L-kynurenine + H2O = L-kynurenine + formate + H(+). It participates in amino-acid degradation; L-tryptophan degradation via kynurenine pathway; L-kynurenine from L-tryptophan: step 2/2. Its function is as follows. Catalyzes the hydrolysis of N-formyl-L-kynurenine to L-kynurenine, the second step in the kynurenine pathway of tryptophan degradation. Kynurenine may be further oxidized to nicotinic acid, NAD(H) and NADP(H). Required for elimination of toxic metabolites. The polypeptide is Kynurenine formamidase (afmid) (Salmo salar (Atlantic salmon)).